A 142-amino-acid chain; its full sequence is Transcription antitermination protein NusB (142 aa).

This sequence belongs to the NusB family.

Its function is as follows. Involved in transcription antitermination. Required for transcription of ribosomal RNA (rRNA) genes. Binds specifically to the boxA antiterminator sequence of the ribosomal RNA (rrn) operons. The protein is Transcription antitermination protein NusB of Actinobacillus succinogenes (strain ATCC 55618 / DSM 22257 / CCUG 43843 / 130Z).